Consider the following 990-residue polypeptide: Activator of stress genes protein 1 (990 aa).

The tract at residues 1 to 88 (MPKREIEDTQ…NKPKSQENKR (88 aa)) is disordered. Residues 9-23 (TQSPYSSTGLVSTGE) show a composition bias toward polar residues. Positions 24–61 (SPKTSTSTPTSSTNNRAATTTTNNTSTTSTSLLKSNSN) are enriched in low complexity. Positions 95–121 (CDTCRQKKVKCDGKQPCIHCTVYSYKC) form a DNA-binding region, zn(2)-C6 fungal-type. 3 stretches are compositionally biased toward low complexity: residues 160-179 (NNNS…QQHV), 282-293 (SFDDSSNSAVSS), and 773-793 (TATT…NSNS). 4 disordered regions span residues 160–192 (NNNS…PADE), 255–295 (QDPD…SSPR), 764–800 (RTAS…TLPA), and 915–944 (SNNN…NGVA).

It belongs to the ASG1 family.

Its subcellular location is the nucleus. Its function is as follows. Transcription factor necessary to sustain growth on non-fermentative carbon sources such as sodium acetate, acetic acid, or ethanol. Plays a role in hyphal formation. The sequence is that of Activator of stress genes protein 1 (ASG1) from Candida albicans (strain SC5314 / ATCC MYA-2876) (Yeast).